A 1038-amino-acid polypeptide reads, in one-letter code: Translation initiation factor IF-2 (1038 aa).

Residues 32 to 442 (GSALASLSDE…RKGVNTAAPR (411 aa)) form a disordered region. Composition is skewed to low complexity over residues 65–77 (PPTK…PVAP), 100–113 (PAEA…PAQP), and 131–147 (PKLA…APAA). 2 stretches are compositionally biased toward basic and acidic residues: residues 204–217 (SGGR…KRES) and 275–295 (RSLD…DAGK). Over residues 311 to 328 (PSAPAKPAAPTGSSGPAA) the composition is skewed to low complexity. Residues 331-344 (PDIKLTRDVIEGHK) show a composition bias toward basic and acidic residues. The span at 422–435 (HHYRRSRPRIRRKG) shows a compositional bias: basic residues. One can recognise a tr-type G domain in the interval 529–696 (ARPPVVTFLG…TLLTIAELNE (168 aa)). The tract at residues 538 to 545 (GHVDHGKT) is G1. Position 538–545 (538–545 (GHVDHGKT)) interacts with GTP. The segment at 563–567 (GITQH) is G2. A G3 region spans residues 584 to 587 (DTPG). GTP-binding positions include 584–588 (DTPGH) and 638–641 (NKID). The G4 stretch occupies residues 638–641 (NKID). Residues 674 to 676 (SAT) form a G5 region.

Belongs to the TRAFAC class translation factor GTPase superfamily. Classic translation factor GTPase family. IF-2 subfamily.

It localises to the cytoplasm. Functionally, one of the essential components for the initiation of protein synthesis. Protects formylmethionyl-tRNA from spontaneous hydrolysis and promotes its binding to the 30S ribosomal subunits. Also involved in the hydrolysis of GTP during the formation of the 70S ribosomal complex. This Rhodopirellula baltica (strain DSM 10527 / NCIMB 13988 / SH1) protein is Translation initiation factor IF-2.